The sequence spans 461 residues: Aspartic proteinase NANA, chloroplast (461 aa).

N-linked (GlcNAc...) asparagine glycosylation occurs at asparagine 86. Positions 106 to 456 constitute a Peptidase A1 domain; it reads YFTEIRVGTP…DLMASTLSFA (351 aa). Residue aspartate 124 is part of the active site. N-linked (GlcNAc...) asparagine glycosylation occurs at asparagine 274. Aspartate 338 is an active-site residue. N-linked (GlcNAc...) asparagine glycosylation occurs at asparagine 386.

It belongs to the peptidase A1 family.

It localises to the plastid. The protein resides in the chloroplast. With respect to regulation, repressed by pepstatin A. Functionally, aspartic proteinase that can use azocasein as substrate and regulates endogenous sugar levels (e.g. sucrose, glucose and fructose) by modulating starch accumulation and remobilization. Influences general morphology and development. This is Aspartic proteinase NANA, chloroplast from Arabidopsis thaliana (Mouse-ear cress).